A 228-amino-acid polypeptide reads, in one-letter code: Probable octanoyltransferase (228 aa).

The BPL/LPL catalytic domain occupies 27–198; it reads SGGDDAFILV…AFEEVFEAKV (172 aa). Residues 65-72, 129-131, and 142-144 contribute to the substrate site; these read RGGDATYH, SIG, and GVA. Cys160 serves as the catalytic Acyl-thioester intermediate.

Belongs to the LipB family.

The protein resides in the cytoplasm. The enzyme catalyses octanoyl-[ACP] + L-lysyl-[protein] = N(6)-octanoyl-L-lysyl-[protein] + holo-[ACP] + H(+). Its pathway is protein modification; protein lipoylation via endogenous pathway; protein N(6)-(lipoyl)lysine from octanoyl-[acyl-carrier-protein]: step 1/2. Functionally, catalyzes the transfer of endogenously produced octanoic acid from octanoyl-acyl-carrier-protein onto the lipoyl domains of lipoate-dependent enzymes. Lipoyl-ACP can also act as a substrate although octanoyl-ACP is likely to be the physiological substrate. This chain is Probable octanoyltransferase, found in Pyrobaculum calidifontis (strain DSM 21063 / JCM 11548 / VA1).